Reading from the N-terminus, the 207-residue chain is ATP synthase subunit b 2 (207 aa).

The helical transmembrane segment at 53-72 (TYASQLLWLVITFGVFYLLM) threads the bilayer.

The protein belongs to the ATPase B chain family. F-type ATPases have 2 components, F(1) - the catalytic core - and F(0) - the membrane proton channel. F(1) has five subunits: alpha(3), beta(3), gamma(1), delta(1), epsilon(1). F(0) has three main subunits: a(1), b(2) and c(10-14). The alpha and beta chains form an alternating ring which encloses part of the gamma chain. F(1) is attached to F(0) by a central stalk formed by the gamma and epsilon chains, while a peripheral stalk is formed by the delta and b chains.

The protein localises to the cell inner membrane. F(1)F(0) ATP synthase produces ATP from ADP in the presence of a proton or sodium gradient. F-type ATPases consist of two structural domains, F(1) containing the extramembraneous catalytic core and F(0) containing the membrane proton channel, linked together by a central stalk and a peripheral stalk. During catalysis, ATP synthesis in the catalytic domain of F(1) is coupled via a rotary mechanism of the central stalk subunits to proton translocation. Functionally, component of the F(0) channel, it forms part of the peripheral stalk, linking F(1) to F(0). The b'-subunit is a diverged and duplicated form of b found in plants and photosynthetic bacteria. This is ATP synthase subunit b 2 (atpF2) from Rhizobium etli (strain ATCC 51251 / DSM 11541 / JCM 21823 / NBRC 15573 / CFN 42).